The sequence spans 271 residues: Thioredoxin-related transmembrane protein 2 homolog (271 aa).

An N-terminal signal peptide occupies residues 1–28 (MTWKKQMALLAKPYYWVNILLAISYLLA). The Extracellular segment spans residues 29–102 (KKTQFICTRL…AILWAYADFR (74 aa)). The helical transmembrane segment at 103–123 (YGLGFLLLCVLVGMVLPEPSY) threads the bilayer. The region spanning 112 to 262 (VLVGMVLPEP…YKEAIERLPI (151 aa)) is the Thioredoxin domain. Residues 124 to 271 (RGPEHITYFR…IAPKEAKKVQ (148 aa)) are Cytoplasmic-facing. The short motif at 268-271 (KKVQ) is the Di-lysine motif element.

It localises to the membrane. This chain is Thioredoxin-related transmembrane protein 2 homolog, found in Drosophila melanogaster (Fruit fly).